Consider the following 386-residue polypeptide: MQGPAVFIDAEIDDQAQELRKFFKSLGAEISEEKSSKGIEDDLHKIIGVCDVCFKDGTQHTLEEIDAVLNSVVSIIVSIPLERGENLILAFCEKMTRAPDSNLARVCLQSLWRLFSNLEPTSPLRYHVYYHLVQVAKRADQVKEVFSGVDQLKSQFSQCPPSNEQMQKLYRLLHDVLKDTNSELASKVMIELLGTYTAENASYAREDAMKCIVTALADPNTFLLDPLLSLKPVRFLEGELIHDLLSVFVSEKLPSYLQFYKNHKEFVNSQGLNHEQNIKKMRLLSFMQLAESNPEMTFQQLQDELQIGENEVEPFIIEVLKTKLVRARMDQKARKVHISSTMHRTFGRPQWQQLRDLLHAWKANLTLVQENMKSVSEAQIELAHKQ.

The PCI domain occupies 181-343 (NSELASKVMI…RKVHISSTMH (163 aa)).

The protein belongs to the eIF-3 subunit M family. In terms of assembly, component of the eukaryotic translation initiation factor 3 (eIF-3) complex.

The protein resides in the cytoplasm. In terms of biological role, component of the eukaryotic translation initiation factor 3 (eIF-3) complex, which is involved in protein synthesis of a specialized repertoire of mRNAs and, together with other initiation factors, stimulates binding of mRNA and methionyl-tRNAi to the 40S ribosome. The eIF-3 complex specifically targets and initiates translation of a subset of mRNAs involved in cell proliferation. This Aedes aegypti (Yellowfever mosquito) protein is Eukaryotic translation initiation factor 3 subunit M.